We begin with the raw amino-acid sequence, 331 residues long: tRNA (guanine-N(7)-)-methyltransferase (331 aa).

3 residues coordinate S-adenosyl-L-methionine: glutamate 29, glutamate 55, and aspartate 105. Aspartate 105 is a catalytic residue. Lysine 109 and aspartate 141 together coordinate substrate.

It belongs to the class I-like SAM-binding methyltransferase superfamily. TrmB family.

The catalysed reaction is guanosine(46) in tRNA + S-adenosyl-L-methionine = N(7)-methylguanosine(46) in tRNA + S-adenosyl-L-homocysteine. Its pathway is tRNA modification; N(7)-methylguanine-tRNA biosynthesis. In terms of biological role, catalyzes the formation of N(7)-methylguanine at position 46 (m7G46) in tRNA. This is tRNA (guanine-N(7)-)-methyltransferase from Deinococcus geothermalis (strain DSM 11300 / CIP 105573 / AG-3a).